Reading from the N-terminus, the 360-residue chain is Protein Wnt-2 (360 aa).

The N-terminal stretch at 1 to 25 (MNAPLGGIWLWLPLLLTWLSPEVSS) is a signal peptide. Disulfide bonds link Cys76/Cys87, Cys127/Cys135, Cys137/Cys157, Cys206/Cys220, Cys208/Cys215, Cys278/Cys309, Cys294/Cys304, Cys308/Cys348, Cys324/Cys339, Cys326/Cys336, and Cys331/Cys332. The O-palmitoleoyl serine; by PORCN moiety is linked to residue Ser212. Asn295 is a glycosylation site (N-linked (GlcNAc...) asparagine).

It belongs to the Wnt family. Post-translationally, palmitoleoylation is required for efficient binding to frizzled receptors. Depalmitoleoylation leads to Wnt signaling pathway inhibition.

The protein localises to the secreted. Its subcellular location is the extracellular space. The protein resides in the extracellular matrix. Its function is as follows. Ligand for members of the frizzled family of seven transmembrane receptors. Probable developmental protein. May be a signaling molecule which affects the development of discrete regions of tissues. Is likely to signal over only few cell diameters. The chain is Protein Wnt-2 (WNT2) from Carollia perspicillata (Seba's short-tailed bat).